We begin with the raw amino-acid sequence, 473 residues long: Inactive levansucrase (473 aa).

A signal peptide spans M1–A29.

This sequence belongs to the glycosyl hydrolase 68 family.

It is found in the secreted. This chain is Inactive levansucrase (sacB), found in Geobacillus stearothermophilus (Bacillus stearothermophilus).